A 259-amino-acid polypeptide reads, in one-letter code: Ovulation prohormone (259 aa).

An N-terminal signal peptide occupies residues 1–34 (MKMSGLLSKPDYGVVGIVFTVVFCCWCSSSTTHA). The propeptide occupies 35 to 102 (LSIAEPGRDR…SGEKTRLTAA (68 aa)). Residues 42–103 (RDRYDKRSPT…GEKTRLTAAK (62 aa)) form a disordered region. 2 consecutive repeats follow at residues 119-123 (RLRFH) and 146-150 (RLRFH). Residues 119 to 150 (RLRFHKRRVDSADESNDDGFDRKAREPRLRFH) are 2 X 5 AA repeats of R-L-R-F-H. The interval 149-197 (FHDVRKRSATAEEGSENAEIEESHLGNSRSRRSAGSAPSSANEVQRSKR) is disordered. The propeptide occupies 181 to 195 (SAGSAPSSANEVQRS). Leu233 carries the post-translational modification Leucine amide. Positions 237–259 (GSAFFDHIPIIFGEPQYDYQPFK) are excised as a propeptide.

It belongs to the molluscan ELH family.

The protein localises to the secreted. Functionally, CDCH induces ovulation and egg-mass production; it may also stimulate synthesis of secretory products in the female accessory sex glands and affect neurons in the neuronal circuits controlling locomotion and feeding. In terms of biological role, calfluxin is involved in the influx of calcium into mitochondria of the albumen gland. CDCA (or alpha-CDCP) triggers the electrical activity of the caudodorsal cells (CDCS). This Lymnaea stagnalis (Great pond snail) protein is Ovulation prohormone.